Consider the following 400-residue polypeptide: Tyrosine-specific transport system 1 (400 aa).

12 consecutive transmembrane segments (helical) span residues 5–25, 34–54, 80–100, 117–137, 143–163, 176–196, 211–231, 250–270, 273–293, 313–333, 335–355, and 370–390; these read VGSTLLVAGTMIGAGMLAMPL, FTLVLLLGLWALLTFSALLFV, IIATAVLIIFLYALIAAYISG, VSVLLFTVIFGSFIVIGTHSV, VLFFVMLAAFAVVLSLMLPEI, ALIISASPVFFTAFGFHGSIP, FSILVGSAITLCAYILWQLST, LNGLVKATFAITGSNVIASAV, FSTLALITSFLGVGLGLLECI, LTFIPPLVFALFYPEGFILAL, YAGQMFAFYAVVLPVSLVWKA, and NLTLIIVLVLGVLITSIPFAI.

Belongs to the amino acid/polyamine transporter 2 family. Mtr/TnaB/TyrP permease subfamily.

The protein resides in the cell inner membrane. It carries out the reaction L-tyrosine(in) + H(+)(in) = L-tyrosine(out) + H(+)(out). Functionally, transports tyrosine across the cytoplasmic membrane. The transport system is energized by the proton motive force. This chain is Tyrosine-specific transport system 1 (tyrP-A), found in Haemophilus influenzae (strain ATCC 51907 / DSM 11121 / KW20 / Rd).